Reading from the N-terminus, the 344-residue chain is Proline-rich transmembrane protein 2 (344 aa).

Disordered regions lie at residues 1 to 220 (MAAS…GAPP) and 233 to 265 (GRAHGGHPGSPRGSLSRHPSSQLAGPGVEGGEG). At 1 to 272 (MAASSSEVSE…GEGTQKPRDY (272 aa)) the chain is on the cytoplasmic side. Position 28 is a phosphoserine (Ser28). The span at 69–82 (PETTETPVETPETV) shows a compositional bias: low complexity. Phosphothreonine is present on residues Thr74 and Thr78. The segment covering 124–143 (AEQQSAAPPEPTSEQALQLN) has biased composition (polar residues). Residues 151–162 (TSQPPPKPPLQA) are compositionally biased toward pro residues. A compositionally biased stretch (polar residues) spans 168 to 178 (ENPTTEVLTES). A compositionally biased stretch (pro residues) spans 201–211 (APQPHSPPSTK). The residue at position 242 (Ser242) is a Phosphoserine. Arg244 is subject to Omega-N-methylarginine. 2 positions are modified to phosphoserine: Ser252 and Ser253. The helical intramembrane region spans 273-293 (IILAILSCFCPMWPVNIVAFA). The Cytoplasmic segment spans residues 294-321 (YAVMSRNSLQQGDVDGAQRLGRVAKLLS). A helical transmembrane segment spans residues 322 to 342 (IVALVGGVLIIIASCVINLGV). Topologically, residues 343-344 (YK) are extracellular.

It belongs to the CD225/Dispanin family. Component of the outer core of AMPAR complex. AMPAR complex consists of an inner core made of 4 pore-forming GluA/GRIA proteins (GRIA1, GRIA2, GRIA3 and GRIA4) and 4 major auxiliary subunits arranged in a twofold symmetry. One of the two pairs of distinct binding sites is occupied either by CNIH2, CNIH3 or CACNG2, CACNG3. The other harbors CACNG2, CACNG3, CACNG4, CACNG8 or GSG1L. This inner core of AMPAR complex is complemented by outer core constituents binding directly to the GluA/GRIA proteins at sites distinct from the interaction sites of the inner core constituents. Outer core constituents include at least PRRT1, PRRT2, CKAMP44/SHISA9, FRRS1L and NRN1. The proteins of the inner and outer core serve as a platform for other, more peripherally associated AMPAR constituents. Alone or in combination, these auxiliary subunits control the gating and pharmacology of the AMPAR complex and profoundly impact their biogenesis and protein processing. Interacts with intersectin 1/ITSN1. Interacts with SNARE complex components, including SNAP25, STX1A, SYT1 and SYT2; this interaction may inhibit SNARE complex formation. In terms of tissue distribution, neuron-specific expression throughout the brain, including hippocampus (at protein level).

The protein resides in the cell membrane. It is found in the presynaptic cell membrane. The protein localises to the synapse. It localises to the cell projection. Its subcellular location is the axon. The protein resides in the cytoplasmic vesicle. It is found in the secretory vesicle. The protein localises to the synaptic vesicle membrane. It localises to the postsynaptic density membrane. Its subcellular location is the dendritic spine. As a component of the outer core of AMPAR complex, may be involved in synaptic transmission in the central nervous system. In hippocampal neurons, in presynaptic terminals, plays an important role in the final steps of neurotransmitter release, possibly by regulating Ca(2+)-sensing. In the cerebellum, may inhibit SNARE complex formation and down-regulate short-term facilitation. The protein is Proline-rich transmembrane protein 2 (Prrt2) of Rattus norvegicus (Rat).